Consider the following 250-residue polypeptide: Ribosomal RNA small subunit methyltransferase G (250 aa).

S-adenosyl-L-methionine contacts are provided by residues Gly-78, Leu-83, 129 to 130 (AE), and Arg-144. Residues 224–250 (IAAPRKRGGQQRRAGHARGTSNRRRGT) form a disordered region. Residues 227–250 (PRKRGGQQRRAGHARGTSNRRRGT) are compositionally biased toward basic residues.

This sequence belongs to the methyltransferase superfamily. RNA methyltransferase RsmG family.

The protein localises to the cytoplasm. Specifically methylates the N7 position of guanine in position 518 of 16S rRNA. The chain is Ribosomal RNA small subunit methyltransferase G from Nocardioides sp. (strain ATCC BAA-499 / JS614).